A 637-amino-acid polypeptide reads, in one-letter code: 1-deoxy-D-xylulose-5-phosphate synthase (637 aa).

Residues H74 and 115-117 each bind thiamine diphosphate; that span reads GHS. D146 provides a ligand contact to Mg(2+). Thiamine diphosphate is bound by residues 147-148, N175, Y285, and E366; that span reads GA. Mg(2+) is bound at residue N175.

It belongs to the transketolase family. DXPS subfamily. As to quaternary structure, homodimer. It depends on Mg(2+) as a cofactor. Requires thiamine diphosphate as cofactor.

The catalysed reaction is D-glyceraldehyde 3-phosphate + pyruvate + H(+) = 1-deoxy-D-xylulose 5-phosphate + CO2. Its pathway is metabolic intermediate biosynthesis; 1-deoxy-D-xylulose 5-phosphate biosynthesis; 1-deoxy-D-xylulose 5-phosphate from D-glyceraldehyde 3-phosphate and pyruvate: step 1/1. Its function is as follows. Catalyzes the acyloin condensation reaction between C atoms 2 and 3 of pyruvate and glyceraldehyde 3-phosphate to yield 1-deoxy-D-xylulose-5-phosphate (DXP). The polypeptide is 1-deoxy-D-xylulose-5-phosphate synthase (Pelotomaculum thermopropionicum (strain DSM 13744 / JCM 10971 / SI)).